Reading from the N-terminus, the 171-residue chain is MKFIPALIIFVFTIFALTNSETTYSGFKITSADPKNPCSISVPQTDVGTKCIDVCGQGNINIAAVSGETNKYDINGYQATDQCKNSAGQQTLTCGTPVTVGVFSIDCAPDAGATTAAVTTAATTAAVTTAATTAAVTTASTTAAFTTTGTSSTIVIPFALILSLLLSVITL.

The N-terminal stretch at 1–20 is a signal peptide; it reads MKFIPALIIFVFTIFALTNS. A lipid anchor (GPI-like-anchor amidated glycine) is attached at G149. Residues 150–171 constitute a propeptide, removed in mature form; it reads TSSTIVIPFALILSLLLSVITL.

This sequence belongs to the ponticulin family. In terms of processing, the GPI-like-anchor contains a phosphoceramide group, rather than a phosphatidyl group.

It is found in the cell membrane. This chain is Ponticulin-like protein F (ponF), found in Dictyostelium discoideum (Social amoeba).